We begin with the raw amino-acid sequence, 320 residues long: Cytochrome f (320 aa).

The first 35 residues, 1–35, serve as a signal peptide directing secretion; the sequence is MQIRNTFSSLKGEITRFISVSLMIYIITRASISNA. Tyr-36, Cys-56, Cys-59, and His-60 together coordinate heme. Residues 286–306 traverse the membrane as a helical segment; sequence VQGLLFFLASVVLAQIFLVLK.

This sequence belongs to the cytochrome f family. As to quaternary structure, the 4 large subunits of the cytochrome b6-f complex are cytochrome b6, subunit IV (17 kDa polypeptide, petD), cytochrome f and the Rieske protein, while the 4 small subunits are PetG, PetL, PetM and PetN. The complex functions as a dimer. It depends on heme as a cofactor.

It is found in the plastid. The protein resides in the chloroplast thylakoid membrane. Component of the cytochrome b6-f complex, which mediates electron transfer between photosystem II (PSII) and photosystem I (PSI), cyclic electron flow around PSI, and state transitions. The sequence is that of Cytochrome f from Citrus sinensis (Sweet orange).